The primary structure comprises 273 residues: Transmembrane protein 202 (273 aa).

4 helical membrane-spanning segments follow: residues 53-75, 121-141, 155-175, and 189-209; these read HIYI…IAMS, FFLI…SSWI, VSML…LFVA, and LLWT…AGII. Positions 242 to 273 are disordered; sequence TTVSPAKDEGPRSEMESLSVREKNLPKSGLWW. Residues 247-266 are compositionally biased toward basic and acidic residues; that stretch reads AKDEGPRSEMESLSVREKNL.

It localises to the membrane. In Homo sapiens (Human), this protein is Transmembrane protein 202 (TMEM202).